We begin with the raw amino-acid sequence, 177 residues long: Dynein light chain Tctex-type 5-A (177 aa).

The protein belongs to the dynein light chain Tctex-type family.

This is Dynein light chain Tctex-type 5-A (Dynlt5-a) from Xenopus laevis (African clawed frog).